The primary structure comprises 680 residues: Fermitin family homolog 2 (680 aa).

Residues 40–81 are interaction with membranes containing phosphatidylinositol phosphate; that stretch reads HIGGVMLKLVEKLDVKKDWSDHALWWEKKRTWLLKTHWTLDK. A disordered region spans residues 141–162; that stretch reads LKKPRDPTKKKKKKLDDQSEDE. Phosphoserine occurs at positions 159, 181, 339, and 351. The region spanning 189–661 is the FERM domain; it reads MTPTYDAHDG…GYIFLSTRAK (473 aa). Residues 380 to 476 form the PH domain; that stretch reads KVFKPKKLTL…WMAACRLASK (97 aa). An a 1,2-diacyl-sn-glycero-3-phospho-(1D-myo-inositol-3,4,5-trisphosphate)-binding site is contributed by lysine 383. Serine 666 carries the phosphoserine modification.

Belongs to the kindlin family. In terms of assembly, interacts with ITGB1; the interaction is inhibited in presence of ITGB1BP1. Interacts with FBLIM1. Interacts with active, unphosphorylated CTNNB1. Identified in a complex with CTNNB1 and TCF7L2/TCF4. Interacts with ILK, ITGB1 and ITGB3. Detected in adult heart muscle (at protein level). Detected in heart, skeletal muscle and testis.

The protein localises to the cytoplasm. Its subcellular location is the cell cortex. It localises to the cytoskeleton. It is found in the stress fiber. The protein resides in the cell junction. The protein localises to the focal adhesion. Its subcellular location is the membrane. It localises to the cell projection. It is found in the lamellipodium membrane. The protein resides in the nucleus. The protein localises to the myofibril. Its subcellular location is the sarcomere. It localises to the i band. It is found in the cell surface. Its function is as follows. Scaffolding protein that enhances integrin activation mediated by TLN1 and/or TLN2, but activates integrins only weakly by itself. Binds to membranes enriched in phosphoinositides. Enhances integrin-mediated cell adhesion onto the extracellular matrix and cell spreading; this requires both its ability to interact with integrins and with phospholipid membranes. Required for the assembly of focal adhesions. Participates in the connection between extracellular matrix adhesion sites and the actin cytoskeleton and also in the orchestration of actin assembly and cell shape modulation. Recruits FBLIM1 to focal adhesions. Plays a role in the TGFB1 and integrin signaling pathways. Stabilizes active CTNNB1 and plays a role in the regulation of transcription mediated by CTNNB1 and TCF7L2/TCF4 and in Wnt signaling. The protein is Fermitin family homolog 2 (Fermt2) of Mus musculus (Mouse).